Reading from the N-terminus, the 402-residue chain is CCA-adding enzyme (402 aa).

Residues Gly32 and Arg35 each coordinate ATP. Residues Gly32 and Arg35 each contribute to the CTP site. Residues Asp45 and Asp47 each contribute to the Mg(2+) site. Residues Arg119, Asp162, Arg165, Arg168, and Arg171 each contribute to the ATP site. Residues Arg119, Asp162, Arg165, Arg168, and Arg171 each coordinate CTP.

It belongs to the tRNA nucleotidyltransferase/poly(A) polymerase family. Bacterial CCA-adding enzyme type 3 subfamily. In terms of assembly, homodimer. It depends on Mg(2+) as a cofactor.

The catalysed reaction is a tRNA precursor + 2 CTP + ATP = a tRNA with a 3' CCA end + 3 diphosphate. It catalyses the reaction a tRNA with a 3' CCA end + 2 CTP + ATP = a tRNA with a 3' CCACCA end + 3 diphosphate. Its function is as follows. Catalyzes the addition and repair of the essential 3'-terminal CCA sequence in tRNAs without using a nucleic acid template. Adds these three nucleotides in the order of C, C, and A to the tRNA nucleotide-73, using CTP and ATP as substrates and producing inorganic pyrophosphate. tRNA 3'-terminal CCA addition is required both for tRNA processing and repair. Also involved in tRNA surveillance by mediating tandem CCA addition to generate a CCACCA at the 3' terminus of unstable tRNAs. While stable tRNAs receive only 3'-terminal CCA, unstable tRNAs are marked with CCACCA and rapidly degraded. The polypeptide is CCA-adding enzyme (Lactococcus lactis subsp. cremoris (strain MG1363)).